The sequence spans 984 residues: Glutamate [NMDA] receptor subunit 1 (984 aa).

Positions 1 to 24 are cleaved as a signal peptide; the sequence is MAAAFAYRWLLCAAGIVNVLPIGA. At 25–570 the chain is on the extracellular side; sequence QRHTASDNPS…TLVSFLQPFS (546 aa). N-linked (GlcNAc...) asparagine glycosylation is found at Asn255, Asn311, Asn342, Asn394, Asn451, Asn478, and Asn498. Residues 527–529 and Arg534 each bind glycine; that span reads PLT. A helical membrane pass occupies residues 571–591; sequence NTLWILVMVSVHVVALVLYLL. The Cytoplasmic segment spans residues 592-648; the sequence is DRFSPFGRFKLSHSDSNEEKALNLSSAVWFAWGVLLNSGIGEGTPRSFSARVLGMVW. The helical transmembrane segment at 649 to 669 threads the bilayer; it reads AGFAMIIVASYTANLAAFLVL. Topologically, residues 670 to 828 are extracellular; it reads ERPKTKLSGI…KTPNTLGLKN (159 aa). Asn690 carries an N-linked (GlcNAc...) asparagine glycan. Residues Ser700 and Asp744 each contribute to the glycine site. Residues 829-849 form a helical membrane-spanning segment; the sequence is MAGVFILVGVGIAGGVGLIII. The Cytoplasmic segment spans residues 850–984; it reads EVIYKKHQVK…YTSDVSHLVV (135 aa). A disordered region spans residues 947–984; sequence KSGLVPPALGLGKTRPQQNPLPPRYSPGYTSDVSHLVV. Positions 974–984 are enriched in polar residues; the sequence is GYTSDVSHLVV.

Belongs to the glutamate-gated ion channel (TC 1.A.10.1) family. Forms a heteromeric NMDA channel with Nmdar2.

The protein resides in the cell membrane. It localises to the postsynaptic cell membrane. Its subcellular location is the postsynaptic density. Functionally, NMDA receptor subtype of glutamate-gated ion channels with high calcium permeability and voltage-dependent sensitivity to magnesium. Mediated by glycine. This protein plays a key role in synaptic plasticity, synaptogenesis, excitotoxicity, memory acquisition and learning. It mediates neuronal functions in glutamate neurotransmission. Is involved in the cell surface targeting of NMDA receptors. Plays a role in associative learning and in long-term memory consolidation. The polypeptide is Glutamate [NMDA] receptor subunit 1 (Drosophila virilis (Fruit fly)).